We begin with the raw amino-acid sequence, 441 residues long: Tol-Pal system protein TolB (441 aa).

Positions 1–39 (MPAMTPAFRRADLTGFLRTYGAALILLLAAMLAWQPAQA) are cleaved as a signal peptide.

Belongs to the TolB family. The Tol-Pal system is composed of five core proteins: the inner membrane proteins TolA, TolQ and TolR, the periplasmic protein TolB and the outer membrane protein Pal. They form a network linking the inner and outer membranes and the peptidoglycan layer.

The protein resides in the periplasm. In terms of biological role, part of the Tol-Pal system, which plays a role in outer membrane invagination during cell division and is important for maintaining outer membrane integrity. This Bordetella bronchiseptica (strain ATCC BAA-588 / NCTC 13252 / RB50) (Alcaligenes bronchisepticus) protein is Tol-Pal system protein TolB.